The sequence spans 375 residues: Superinfection exclusion protein (375 aa).

A signal peptide spans M1–A15.

This sequence belongs to the serpin family. Orthopoxvirus OPG040 subfamily. As to quaternary structure, interacts with OPG185/A56 protein.

The protein localises to the virion membrane. Its subcellular location is the host cell membrane. In terms of biological role, negatively regulates superinfection and syncytium formation in infected host cells. Acts in concert with OPG185/A56 protein at the host cell membrane by interacting with and inhibiting the mature virion entry/fusion complex (EFC). This mechanism ensures that new virions released from the cell cannot enter already infected cells. The sequence is that of Superinfection exclusion protein (OPG040) from Cynomys gunnisoni (Gunnison's prairie dog).